Reading from the N-terminus, the 343-residue chain is Twinfilin (343 aa).

2 consecutive ADF-H domains span residues 4–139 (QTGI…KHKV) and 177–312 (GINC…EELH). Residues 314-343 (RKLNLRPQFSKPKGPPSRGAKRLTKPQAVE) are disordered.

This sequence belongs to the actin-binding proteins ADF family. Twinfilin subfamily. Interacts with G-actin; ADP-actin form.

It is found in the cytoplasm. Its subcellular location is the cytoskeleton. It localises to the cell cortex. In terms of biological role, actin-binding protein involved in motile and morphological processes. Inhibits actin polymerization, likely by sequestering G-actin. This is Twinfilin (twf) from Anopheles gambiae (African malaria mosquito).